A 354-amino-acid polypeptide reads, in one-letter code: Short-chain dehydrogenase/reductase SAT2 (354 aa).

NADP(+)-binding residues include Ile31, Asp85, Arg201, and Val233.

This sequence belongs to the short-chain dehydrogenases/reductases (SDR) family.

The protein operates within mycotoxin biosynthesis. Short-chain dehydrogenase/reductase; part of the satratoxin SC1 cluster involved in the biosynthesis of satratoxins, trichothecene mycotoxins that are associated with human food poisonings. Satratoxins are suggested to be made by products of multiple gene clusters (SC1, SC2 and SC3) that encode 21 proteins in all, including polyketide synthases, acetyltransferases, and other enzymes expected to modify the trichothecene skeleton. SC1 encodes 10 proteins, SAT1 to SAT10. The largest are SAT8, which encodes a putative polyketide synthase (PKS) with a conventional non-reducing architecture, and SAT10, a putative protein containing four ankyrin repeats and thus may be involved in protein scaffolding. The putative short-chain reductase SAT3 may assist the PKS in some capacity. SAT6 contains a secretory lipase domain and acts probably as a trichothecene esterase. SAT5 encodes a putative acetyltransferase, and so, with SAT6, may affect endogenous protection from toxicity. The probable transcription factor SAT9 may regulate the expression of the SC1 cluster. SC2 encodes proteins SAT11 to SAT16, the largest of which encodes the putative reducing PKS SAT13. SAT11 is a cytochrome P450 monooxygenase, while SAT14 and SAT16 are probable acetyltransferases. The SC2 cluster may be regulated by the transcription factor SAT15. SC3 is a small cluster that encodes 5 proteins, SAT17 to SAT21. SAT21 is a putative MFS-type transporter which may have a role in exporting secondary metabolites. The four other proteins putatively encoded in SC3 include the taurine hydroxylase-like protein SAT17, the O-methyltransferase SAT18, the acetyltransferase SAT19, and the Cys6-type zinc finger SAT20, the latter being probably involved in regulation of SC3 expression. The protein is Short-chain dehydrogenase/reductase SAT2 of Stachybotrys chartarum (strain CBS 109288 / IBT 7711) (Toxic black mold).